The sequence spans 308 residues: tRNA dimethylallyltransferase (308 aa).

10 to 17 (GPTASGKT) lines the ATP pocket. Position 12–17 (12–17 (TASGKT)) interacts with substrate. Interaction with substrate tRNA stretches follow at residues 35–38 (DSSL) and 159–163 (QRIFR).

The protein belongs to the IPP transferase family. In terms of assembly, monomer. It depends on Mg(2+) as a cofactor.

The catalysed reaction is adenosine(37) in tRNA + dimethylallyl diphosphate = N(6)-dimethylallyladenosine(37) in tRNA + diphosphate. Catalyzes the transfer of a dimethylallyl group onto the adenine at position 37 in tRNAs that read codons beginning with uridine, leading to the formation of N6-(dimethylallyl)adenosine (i(6)A). This Francisella philomiragia subsp. philomiragia (strain ATCC 25017 / CCUG 19701 / FSC 153 / O#319-036) protein is tRNA dimethylallyltransferase.